The chain runs to 76 residues: Small ribosomal subunit protein bS18 (76 aa).

The protein belongs to the bacterial ribosomal protein bS18 family. In terms of assembly, part of the 30S ribosomal subunit. Forms a tight heterodimer with protein bS6.

Binds as a heterodimer with protein bS6 to the central domain of the 16S rRNA, where it helps stabilize the platform of the 30S subunit. In Pseudomonas aeruginosa (strain LESB58), this protein is Small ribosomal subunit protein bS18.